The chain runs to 775 residues: K(+)-insensitive pyrophosphate-energized proton pump (775 aa).

A run of 5 helical transmembrane segments spans residues 9–29 (SLAV…AFFI), 65–85 (ISIL…IIPP), 108–128 (AVAF…GMNV), 160–180 (MLTV…FGIA), and 185–205 (LLGF…GGGI). Residue lysine 208 coordinates substrate. Residues aspartate 211, aspartate 215, and aspartate 241 each coordinate Mg(2+). Helical transmembrane passes span 259 to 279 (VTLV…VGTI), 288 to 308 (FIIF…IGNL), 327 to 347 (FYIA…VFMV), 359 to 379 (FFAT…TEYF), 413 to 433 (SVWA…IYAG), and 442 to 462 (AILY…GNTI). Aspartate 472 provides a ligand contact to Mg(2+). The next 4 helical transmembrane spans lie at 508-528 (IAIG…FTDV), 555-575 (PVFI…ALTI), 622-642 (LISL…TLGV), and 644-664 (ALGG…VFQA). Ca(2+) contacts are provided by aspartate 671, aspartate 697, and aspartate 701. Lysine 704 is a substrate binding site. Helical transmembrane passes span 710-730 (ALNP…PIVV) and 735-755 (GSPG…WAIW).

This sequence belongs to the H(+)-translocating pyrophosphatase (TC 3.A.10) family. K(+)-insensitive subfamily. As to quaternary structure, homodimer. The cofactor is Mg(2+).

It is found in the cell membrane. It catalyses the reaction diphosphate + H2O + H(+)(in) = 2 phosphate + 2 H(+)(out). Its function is as follows. Proton pump that utilizes the energy of pyrophosphate hydrolysis as the driving force for proton movement across the membrane. Generates a proton motive force. The protein is K(+)-insensitive pyrophosphate-energized proton pump of Chloroflexus aurantiacus (strain ATCC 29366 / DSM 635 / J-10-fl).